Reading from the N-terminus, the 187-residue chain is Adenylate kinase (187 aa).

Residue 11 to 16 coordinates ATP; sequence GAGKGT. Residues 31–60 form an NMP region; the sequence is STGDILREAVKNQTPMGIEAKRYMDAGDLV. Residues T32, R37, 58–60, 86–89, and Q93 contribute to the AMP site; these read DLV and GFPR. An LID region spans residues 127–137; it reads GRAEIEGRADD. An ATP-binding site is contributed by R128. Residues R134 and R145 each contribute to the AMP site. Residue G173 coordinates ATP.

The protein belongs to the adenylate kinase family. As to quaternary structure, monomer.

It is found in the cytoplasm. The catalysed reaction is AMP + ATP = 2 ADP. Its pathway is purine metabolism; AMP biosynthesis via salvage pathway; AMP from ADP: step 1/1. In terms of biological role, catalyzes the reversible transfer of the terminal phosphate group between ATP and AMP. Plays an important role in cellular energy homeostasis and in adenine nucleotide metabolism. The sequence is that of Adenylate kinase from Leptospira borgpetersenii serovar Hardjo-bovis (strain JB197).